We begin with the raw amino-acid sequence, 433 residues long: Probable mannan endo-1,4-beta-mannosidase F (433 aa).

Positions 1–19 are cleaved as a signal peptide; it reads MKRQALTLIPLLGAAAAQS. The region spanning 20–53 is the CBM1 domain; the sequence is GPYGQCGGNDWSGATTCVSGYVCVYQNEWYSQCV. Positions 56 to 82 are thr-rich linker; the sequence is TATSSSTTLTTTTSATTRTTTTTTSTT. The segment at 83-433 is catalytic; the sequence is SVPSSTNFPS…TEHMERIAAR (351 aa). An N-linked (GlcNAc...) asparagine glycan is attached at N97. Substrate contacts are provided by W142 and N255. The active-site Proton donor is the E256. Y331 is a binding site for substrate. E364 (nucleophile) is an active-site residue. W394 provides a ligand contact to substrate.

This sequence belongs to the glycosyl hydrolase 5 (cellulase A) family.

Its subcellular location is the secreted. The catalysed reaction is Random hydrolysis of (1-&gt;4)-beta-D-mannosidic linkages in mannans, galactomannans and glucomannans.. Functionally, endo-1,4-mannanase, a crucial enzyme for depolymerization of seed galactomannans and wood galactoglucomannans. In Emericella nidulans (strain FGSC A4 / ATCC 38163 / CBS 112.46 / NRRL 194 / M139) (Aspergillus nidulans), this protein is Probable mannan endo-1,4-beta-mannosidase F (manF).